The following is a 95-amino-acid chain: Alpha-conotoxin VxXXB (95 aa).

The signal sequence occupies residues 1–24; the sequence is MPKLAVVLLVLLILPLSYFDAAGG. A propeptide spanning residues 25–45 is cleaved from the precursor; that stretch reads QAVQGDWRGNRLARDLQRGGR. 4-carboxyglutamate occurs at positions 48 and 50. P59 is modified (4-hydroxyproline; partial). Disulfide bonds link C64-C73, C69-C81, C74-C91, and C79-C93. 4-hydroxyproline; partial is present on P75. Residue P94 is modified to 4-hydroxyproline; partial. P94 carries the post-translational modification Proline amide; in form [desGly-95]VxXXB.

It belongs to the conotoxin D superfamily. Homodimer. Pseudo-homodimer (identical sequence, different post-translational modifications). In terms of tissue distribution, expressed by the venom duct.

It localises to the secreted. In terms of biological role, alpha-conotoxins act on postsynaptic membranes, they bind to the nicotinic acetylcholine receptors (nAChR) and thus inhibit them. Through its two C-terminal domains, this homodimeric protein would bind to two nAChR allosteric sites, located outside the nAChR C-loop of the principal binding face and at the adjacent binding interface in a clockwise direction. It specifically blocks mammalian neuronal nAChR of the alpha-7/CHRNA7 (IC(50)=0.4 nM), alpha-3-beta-2/CHRNA3-CHRNB2 (IC(50)=8.4 nM) and alpha-4-beta-2/CHRNA4-CHRNB2 (IC(50)=228 nM) subtypes. It inhibits alpha-7/CHRNA7, alpha-3-beta-2/CHRNA3-CHRNB2 and alpha-4-beta-2/CHRNA4-CHRNB2 nAChR subtypes more efficiently than VxXXA and VxXXC. In Conus vexillum (Flag cone), this protein is Alpha-conotoxin VxXXB.